Consider the following 377-residue polypeptide: Putrescine transport ATP-binding protein PotG (377 aa).

The region spanning 20–250 (LEIRNLTKSY…PTTRYSAEFI (231 aa)) is the ABC transporter domain. ATP is bound at residue 52–59 (GASGCGKS).

Belongs to the ABC transporter superfamily. As to quaternary structure, the complex is composed of two ATP-binding proteins (PotG), two transmembrane proteins (PotH and PotI) and a solute-binding protein (PotF).

It localises to the cell inner membrane. It catalyses the reaction putrescine(out) + ATP + H2O = putrescine(in) + ADP + phosphate + H(+). With respect to regulation, transport is feedback inhibited by intracellular polyamines. Part of the ABC transporter complex PotFGHI involved in putrescine uptake. Responsible for energy coupling to the transport system. Imports putrescine for maintenance of the optimal concentration of polyamines necessary for cell growth in the presence of glucose. The polypeptide is Putrescine transport ATP-binding protein PotG (Escherichia coli (strain K12)).